A 34-amino-acid polypeptide reads, in one-letter code: Photosystem II reaction center protein M (34 aa).

A helical transmembrane segment spans residues 7–27; the sequence is GFVASLMFILVPAIFLIVLYI.

Belongs to the PsbM family. As to quaternary structure, PSII is composed of 1 copy each of membrane proteins PsbA, PsbB, PsbC, PsbD, PsbE, PsbF, PsbH, PsbI, PsbJ, PsbK, PsbL, PsbM, PsbT, PsbX, PsbY, PsbZ, Psb30/Ycf12, peripheral proteins PsbO, CyanoQ (PsbQ), PsbU, PsbV and a large number of cofactors. It forms dimeric complexes.

It localises to the cellular thylakoid membrane. One of the components of the core complex of photosystem II (PSII). PSII is a light-driven water:plastoquinone oxidoreductase that uses light energy to abstract electrons from H(2)O, generating O(2) and a proton gradient subsequently used for ATP formation. It consists of a core antenna complex that captures photons, and an electron transfer chain that converts photonic excitation into a charge separation. This subunit is found at the monomer-monomer interface. The chain is Photosystem II reaction center protein M from Synechococcus sp. (strain CC9902).